Here is a 52-residue protein sequence, read N- to C-terminus: Repressor-like protein SSo7c3 (52 aa).

The SpoVT-AbrB domain maps to 4–51 (EEVVKVSRNYQVTIPAKVRQKFPVKEGDLVKVIYDENGGVVKIQILDS).

In Saccharolobus solfataricus (strain ATCC 35092 / DSM 1617 / JCM 11322 / P2) (Sulfolobus solfataricus), this protein is Repressor-like protein SSo7c3.